Consider the following 916-residue polypeptide: DNA mismatch repair protein MutS (916 aa).

The tract at residues 1 to 47 is disordered; that stretch reads MSEALSVPAAEGENTVTASESPDLAATSARAEKVGKQEKPEKAEKQS. Residues 30-45 show a composition bias toward basic and acidic residues; it reads RAEKVGKQEKPEKAEK. 656-663 provides a ligand contact to ATP; the sequence is GPNMGGKS. Residues 843-861 are compositionally biased toward polar residues; that stretch reads ADATPTPQMDLFSAQSSPS. The disordered stretch occupies residues 843–880; the sequence is ADATPTPQMDLFSAQSSPSADDEDDKSAGQSAVPPAQA.

The protein belongs to the DNA mismatch repair MutS family.

Its function is as follows. This protein is involved in the repair of mismatches in DNA. It is possible that it carries out the mismatch recognition step. This protein has a weak ATPase activity. This Cupriavidus metallidurans (strain ATCC 43123 / DSM 2839 / NBRC 102507 / CH34) (Ralstonia metallidurans) protein is DNA mismatch repair protein MutS.